A 573-amino-acid chain; its full sequence is Anti-Muellerian hormone type-2 receptor (573 aa).

Positions 1-17 (MLGSLGLWALLPTAVEA) are cleaved as a signal peptide. Residues 18–149 (PPNRRTCVFF…APGESIWMAL (132 aa)) are Extracellular-facing. 2 disulfides stabilise this stretch: Cys-55/Cys-79 and Cys-92/Cys-109. An N-linked (GlcNAc...) asparagine glycan is attached at Asn-66. N-linked (GlcNAc...) asparagine glycosylation is present at Asn-119. A helical membrane pass occupies residues 150–170 (VLLGLFLLLLLLLGSIILALL). Residues 171 to 573 (QRKNYRVRGE…PQPACTLSPV (403 aa)) are Cytoplasmic-facing. The 316-residue stretch at 203–518 (LCFSQVIREG…AHPQESHPFP (316 aa)) folds into the Protein kinase domain. ATP is bound by residues 209-217 (IREGGHAVV) and Lys-230. The active-site Proton acceptor is the Asp-333.

This sequence belongs to the protein kinase superfamily. TKL Ser/Thr protein kinase family. TGFB receptor subfamily. In terms of assembly, interacts with type I receptor ACVR1. It depends on Mg(2+) as a cofactor. Requires Mn(2+) as cofactor.

It localises to the membrane. The catalysed reaction is L-threonyl-[receptor-protein] + ATP = O-phospho-L-threonyl-[receptor-protein] + ADP + H(+). The enzyme catalyses L-seryl-[receptor-protein] + ATP = O-phospho-L-seryl-[receptor-protein] + ADP + H(+). Functionally, on ligand binding, forms a receptor complex consisting of two type II and two type I transmembrane serine/threonine kinases. Type II receptors phosphorylate and activate type I receptors which autophosphorylate, then bind and activate SMAD transcriptional regulators. Receptor for anti-Muellerian hormone. The protein is Anti-Muellerian hormone type-2 receptor (AMHR2) of Homo sapiens (Human).